The sequence spans 155 residues: MATELTVQSERAFQKQPHIFTNPKAKANKKTKRWYKDVGLGFKTPKAAIEGSYIDKKCPFAGTVSIRGKILTGTVVSTKMHRTIIIRRDYLHYVPKYNRYEKRHKNVAAHVSPAFRVEEGDVVTVGQCRPISKTVRFNVLKVSAGASRSKKFSKF.

Belongs to the universal ribosomal protein uS17 family. Component of the small ribosomal subunit. Mature ribosomes consist of a small (40S) and a large (60S) subunit. The 40S subunit contains about 32 different proteins and 1 molecule of RNA (18S). The 60S subunit contains 45 different proteins and 3 molecules of RNA (25S, 5.8S and 5S).

Its subcellular location is the cytoplasm. Component of the ribosome, a large ribonucleoprotein complex responsible for the synthesis of proteins in the cell. The small ribosomal subunit (SSU) binds messenger RNAs (mRNAs) and translates the encoded message by selecting cognate aminoacyl-transfer RNA (tRNA) molecules. The large subunit (LSU) contains the ribosomal catalytic site termed the peptidyl transferase center (PTC), which catalyzes the formation of peptide bonds, thereby polymerizing the amino acids delivered by tRNAs into a polypeptide chain. The nascent polypeptides leave the ribosome through a tunnel in the LSU and interact with protein factors that function in enzymatic processing, targeting, and the membrane insertion of nascent chains at the exit of the ribosomal tunnel. This is Small ribosomal subunit protein uS17 from Candida albicans (strain SC5314 / ATCC MYA-2876) (Yeast).